The sequence spans 85 residues: Large ribosomal subunit protein bL31B (85 aa).

This sequence belongs to the bacterial ribosomal protein bL31 family. Type B subfamily. Part of the 50S ribosomal subunit.

The polypeptide is Large ribosomal subunit protein bL31B (Pseudomonas entomophila (strain L48)).